We begin with the raw amino-acid sequence, 385 residues long: UPF0744 protein YSC83 (385 aa).

It belongs to the UPF0744 family.

The protein resides in the mitochondrion outer membrane. The polypeptide is UPF0744 protein YSC83 (YSC83) (Saccharomyces cerevisiae (strain ATCC 204508 / S288c) (Baker's yeast)).